A 131-amino-acid polypeptide reads, in one-letter code: D-ribose pyranase (131 aa).

His20 serves as the catalytic Proton donor. Substrate-binding positions include Asp28, His98, and 120 to 122 (YAN).

Belongs to the RbsD / FucU family. RbsD subfamily. As to quaternary structure, homodecamer.

Its subcellular location is the cytoplasm. The enzyme catalyses beta-D-ribopyranose = beta-D-ribofuranose. The protein operates within carbohydrate metabolism; D-ribose degradation; D-ribose 5-phosphate from beta-D-ribopyranose: step 1/2. In terms of biological role, catalyzes the interconversion of beta-pyran and beta-furan forms of D-ribose. This chain is D-ribose pyranase, found in Bacillus cytotoxicus (strain DSM 22905 / CIP 110041 / 391-98 / NVH 391-98).